Consider the following 387-residue polypeptide: 4-hydroxy-3-methylbut-2-en-1-yl diphosphate synthase (flavodoxin) (387 aa).

[4Fe-4S] cluster-binding residues include Cys-280, Cys-283, Cys-315, and Glu-322.

This sequence belongs to the IspG family. The cofactor is [4Fe-4S] cluster.

It carries out the reaction (2E)-4-hydroxy-3-methylbut-2-enyl diphosphate + oxidized [flavodoxin] + H2O + 2 H(+) = 2-C-methyl-D-erythritol 2,4-cyclic diphosphate + reduced [flavodoxin]. It participates in isoprenoid biosynthesis; isopentenyl diphosphate biosynthesis via DXP pathway; isopentenyl diphosphate from 1-deoxy-D-xylulose 5-phosphate: step 5/6. In terms of biological role, converts 2C-methyl-D-erythritol 2,4-cyclodiphosphate (ME-2,4cPP) into 1-hydroxy-2-methyl-2-(E)-butenyl 4-diphosphate. This Mycobacterium bovis (strain BCG / Pasteur 1173P2) protein is 4-hydroxy-3-methylbut-2-en-1-yl diphosphate synthase (flavodoxin).